Consider the following 466-residue polypeptide: 3-isopropylmalate dehydratase large subunit (466 aa).

Residues C347, C407, and C410 each coordinate [4Fe-4S] cluster.

It belongs to the aconitase/IPM isomerase family. LeuC type 1 subfamily. Heterodimer of LeuC and LeuD. Requires [4Fe-4S] cluster as cofactor.

The enzyme catalyses (2R,3S)-3-isopropylmalate = (2S)-2-isopropylmalate. Its pathway is amino-acid biosynthesis; L-leucine biosynthesis; L-leucine from 3-methyl-2-oxobutanoate: step 2/4. Its function is as follows. Catalyzes the isomerization between 2-isopropylmalate and 3-isopropylmalate, via the formation of 2-isopropylmaleate. This Buchnera aphidicola subsp. Diuraphis noxia protein is 3-isopropylmalate dehydratase large subunit.